The following is a 365-amino-acid chain: Ribosomal RNA large subunit methyltransferase F (365 aa).

The tract at residues 1-50 (MSKPAVKSVPSATAKTATRAVNIRQKVKAPKQAKPEAKGRAKPSKDKPRA) is disordered. Residues 33–50 (AKPEAKGRAKPSKDKPRA) are compositionally biased toward basic and acidic residues.

The protein belongs to the methyltransferase superfamily. METTL16/RlmF family.

The protein localises to the cytoplasm. The enzyme catalyses adenosine(1618) in 23S rRNA + S-adenosyl-L-methionine = N(6)-methyladenosine(1618) in 23S rRNA + S-adenosyl-L-homocysteine + H(+). Functionally, specifically methylates the adenine in position 1618 of 23S rRNA. In Shewanella baltica (strain OS155 / ATCC BAA-1091), this protein is Ribosomal RNA large subunit methyltransferase F.